The chain runs to 424 residues: Serine--tRNA ligase (424 aa).

Basic and acidic residues predominate over residues 1 to 15 (MIDPKLLRTDPDAVR). Positions 1–27 (MIDPKLLRTDPDAVRRSQAARGEDSSV) are disordered. 230–232 (TSE) is an L-serine binding site. ATP is bound by residues 261-263 (RRE) and Val-277. Glu-284 provides a ligand contact to L-serine. 348–351 (EITS) is an ATP binding site. Thr-382 lines the L-serine pocket.

The protein belongs to the class-II aminoacyl-tRNA synthetase family. Type-1 seryl-tRNA synthetase subfamily. As to quaternary structure, homodimer. The tRNA molecule binds across the dimer.

The protein localises to the cytoplasm. The catalysed reaction is tRNA(Ser) + L-serine + ATP = L-seryl-tRNA(Ser) + AMP + diphosphate + H(+). It catalyses the reaction tRNA(Sec) + L-serine + ATP = L-seryl-tRNA(Sec) + AMP + diphosphate + H(+). Its pathway is aminoacyl-tRNA biosynthesis; selenocysteinyl-tRNA(Sec) biosynthesis; L-seryl-tRNA(Sec) from L-serine and tRNA(Sec): step 1/1. Catalyzes the attachment of serine to tRNA(Ser). Is also able to aminoacylate tRNA(Sec) with serine, to form the misacylated tRNA L-seryl-tRNA(Sec), which will be further converted into selenocysteinyl-tRNA(Sec). The protein is Serine--tRNA ligase of Cutibacterium acnes (strain DSM 16379 / KPA171202) (Propionibacterium acnes).